The following is a 404-amino-acid chain: Multidrug resistance protein MdtG (404 aa).

The next 11 helical transmembrane spans lie at 19-39, 56-76, 90-110, 113-133, 149-169, 171-191, 222-242, 254-274, 288-308, 317-337, and 376-396; these read LGCFLTGAAFSLVMPFLPLYV, LVFSITFLFSAIASPFWGGLA, LGMAIVMLLMGMAQNIWQFLI, ALLGLLGGFIPNANALIATQV, GVSGALLGPLAGGLLAGHYGL, PVFFITASVLFICFLLTFFFI, LFVTTLIIQVATGSIAPILTL, IAFISGMIASVPGVAALLSAP, ILIVALIISVLLLIPMSFVQT, FLLGAADGALLPAVQTLLVYN, and AVFCVTAGVVLFNAIYSWNSL.

This sequence belongs to the major facilitator superfamily. DHA1 family. MdtG (TC 2.A.1.2.20) subfamily.

It is found in the cell inner membrane. This Salmonella paratyphi C (strain RKS4594) protein is Multidrug resistance protein MdtG.